We begin with the raw amino-acid sequence, 677 residues long: UvrABC system protein B (677 aa).

The Helicase ATP-binding domain maps to 27–414 (ANLGHGVRDQ…SQGVIAEQII (388 aa)). 40–47 (GVTGSGKT) contacts ATP. The Beta-hairpin signature appears at 93 to 116 (YYDYYQPEAYVPASDTYIEKDSSI). The Helicase C-terminal domain maps to 432-594 (QVDDLLAECR…IEPRTIRKSL (163 aa)). The UVR domain occupies 638-673 (AKHIQKLEREMREAAKELEFERAATLRDRIRLLRER).

It belongs to the UvrB family. In terms of assembly, forms a heterotetramer with UvrA during the search for lesions. Interacts with UvrC in an incision complex.

It localises to the cytoplasm. In terms of biological role, the UvrABC repair system catalyzes the recognition and processing of DNA lesions. A damage recognition complex composed of 2 UvrA and 2 UvrB subunits scans DNA for abnormalities. Upon binding of the UvrA(2)B(2) complex to a putative damaged site, the DNA wraps around one UvrB monomer. DNA wrap is dependent on ATP binding by UvrB and probably causes local melting of the DNA helix, facilitating insertion of UvrB beta-hairpin between the DNA strands. Then UvrB probes one DNA strand for the presence of a lesion. If a lesion is found the UvrA subunits dissociate and the UvrB-DNA preincision complex is formed. This complex is subsequently bound by UvrC and the second UvrB is released. If no lesion is found, the DNA wraps around the other UvrB subunit that will check the other stand for damage. The chain is UvrABC system protein B from Nitratidesulfovibrio vulgaris (strain ATCC 29579 / DSM 644 / CCUG 34227 / NCIMB 8303 / VKM B-1760 / Hildenborough) (Desulfovibrio vulgaris).